The sequence spans 226 residues: Cytidylate kinase (226 aa).

Residue 10–18 (GPAGAGKST) coordinates ATP.

It belongs to the cytidylate kinase family. Type 1 subfamily.

It is found in the cytoplasm. The catalysed reaction is CMP + ATP = CDP + ADP. It carries out the reaction dCMP + ATP = dCDP + ADP. This is Cytidylate kinase from Caldicellulosiruptor saccharolyticus (strain ATCC 43494 / DSM 8903 / Tp8T 6331).